Here is a 378-residue protein sequence, read N- to C-terminus: Manganese peroxidase 1 (378 aa).

The N-terminal stretch at Met1–Thr21 is a signal peptide. 5 disulfide bridges follow: Cys24–Cys36, Cys35–Cys310, Cys54–Cys138, Cys274–Cys340, and Cys362–Cys369. Glu56 and Glu60 together coordinate Mn(2+). The Proton acceptor role is filled by His67. Ca(2+) is bound by residues Asp68, Gly83, Asp85, and Ser87. N-linked (GlcNAc...) asparagine glycans are attached at residues Asn97 and Asn152. Residue His194 participates in heme b binding. Ser195 is a binding site for Ca(2+). Asp200 is a Mn(2+) binding site. Asp212, Thr214, Thr217, and Asp219 together coordinate Ca(2+). An N-linked (GlcNAc...) asparagine glycan is attached at Asn238.

Belongs to the peroxidase family. Ligninase subfamily. Requires Ca(2+) as cofactor. Heme b is required as a cofactor.

It localises to the secreted. It catalyses the reaction 2 Mn(2+) + H2O2 + 2 H(+) = 2 Mn(3+) + 2 H2O. Catalyzes the oxidation of Mn(2+) to Mn(3+). The latter, acting as a diffusible redox mediator, is capable of oxidizing a variety of lignin compounds. This Phanerodontia chrysosporium (White-rot fungus) protein is Manganese peroxidase 1 (MNP1).